A 230-amino-acid chain; its full sequence is D-glycero-alpha-D-manno-heptose 1-phosphate guanylyltransferase (230 aa).

This sequence belongs to the D-alpha-D-heptose-1-P guanylyltransferase family.

The enzyme catalyses D-glycero-alpha-D-manno-heptose 1-phosphate + GTP + H(+) = GDP-D-glycero-alpha-D-manno-heptose + diphosphate. Its pathway is nucleotide-sugar biosynthesis; GDP-D-glycero-alpha-D-manno-heptose biosynthesis; GDP-D-glycero-alpha-D-manno-heptose from D-glycero-alpha-D-manno-heptose 7-phosphate: step 3/3. It participates in cell surface structure biogenesis; S-layer biogenesis. Catalyzes the GDP transfer from GTP to D-glycero-alpha-D-manno-heptose 1-phosphate, yielding GDP-D-alpha-D-heptose. Cannot use ATP, CTP, dTTP or UTP as substrate. In Aneurinibacillus thermoaerophilus, this protein is D-glycero-alpha-D-manno-heptose 1-phosphate guanylyltransferase (hddC).